Reading from the N-terminus, the 119-residue chain is Protein TusC (119 aa).

This sequence belongs to the DsrF/TusC family. Heterohexamer, formed by a dimer of trimers. The hexameric TusBCD complex contains 2 copies each of TusB, TusC and TusD. The TusBCD complex interacts with TusE.

The protein localises to the cytoplasm. In terms of biological role, part of a sulfur-relay system required for 2-thiolation of 5-methylaminomethyl-2-thiouridine (mnm(5)s(2)U) at tRNA wobble positions. This is Protein TusC from Shigella boydii serotype 18 (strain CDC 3083-94 / BS512).